The chain runs to 291 residues: Nucleotide-binding protein Cthe_0113 (291 aa).

8 to 15 (GISGAGKS) contributes to the ATP binding site. 59–62 (DIRG) contributes to the GTP binding site.

It belongs to the RapZ-like family.

In terms of biological role, displays ATPase and GTPase activities. The chain is Nucleotide-binding protein Cthe_0113 from Acetivibrio thermocellus (strain ATCC 27405 / DSM 1237 / JCM 9322 / NBRC 103400 / NCIMB 10682 / NRRL B-4536 / VPI 7372) (Clostridium thermocellum).